A 752-amino-acid chain; its full sequence is Endo-1,4-beta-xylanase 3 (752 aa).

A disordered region spans residues 1–22 (MEKNTNTNHTSDDNNDKNHTNE). Basic and acidic residues predominate over residues 10–22 (TSDDNNDKNHTNE). CBM-cenC domains lie at 26–163 (KIIL…EGPP) and 197–344 (NIVE…VQGP). The GH10 domain occupies 397–692 (FPYIVKVKQT…NEAGKRFLEV (296 aa)). The Proton donor role is filled by E526. Catalysis depends on E627, which acts as the Nucleophile.

This sequence belongs to the glycosyl hydrolase 10 (cellulase F) family. Confined to immature xylems.

It catalyses the reaction Endohydrolysis of (1-&gt;4)-beta-D-xylosidic linkages in xylans.. It functions in the pathway glycan degradation; xylan degradation. Its function is as follows. Binds to and hydrolyzes insoluble and soluble xylan substrates. The chain is Endo-1,4-beta-xylanase 3 from Arabidopsis thaliana (Mouse-ear cress).